The primary structure comprises 659 residues: DNA ligase (659 aa).

NAD(+)-binding positions include 32–36 (DAEYD), 81–82 (SL), and glutamate 110. Lysine 112 (N6-AMP-lysine intermediate) is an active-site residue. Residues arginine 133, glutamate 168, lysine 284, and lysine 308 each coordinate NAD(+). Cysteine 402, cysteine 405, cysteine 420, and cysteine 425 together coordinate Zn(2+). In terms of domain architecture, BRCT spans 582–659 (AKPQIFAGKS…SEEEFAELLP (78 aa)).

Belongs to the NAD-dependent DNA ligase family. LigA subfamily. The cofactor is Mg(2+). Requires Mn(2+) as cofactor.

The enzyme catalyses NAD(+) + (deoxyribonucleotide)n-3'-hydroxyl + 5'-phospho-(deoxyribonucleotide)m = (deoxyribonucleotide)n+m + AMP + beta-nicotinamide D-nucleotide.. DNA ligase that catalyzes the formation of phosphodiester linkages between 5'-phosphoryl and 3'-hydroxyl groups in double-stranded DNA using NAD as a coenzyme and as the energy source for the reaction. It is essential for DNA replication and repair of damaged DNA. The protein is DNA ligase of Desulfitobacterium hafniense (strain DSM 10664 / DCB-2).